The sequence spans 215 residues: Cytochrome b6 (215 aa).

The helical transmembrane segment at 32–52 threads the bilayer; the sequence is IFYCLGGITFTSFVIQVASGF. Cys35 is a heme c binding site. 2 residues coordinate heme b: His86 and His100. The next 3 helical transmembrane spans lie at 90-110, 116-136, and 186-206; these read ASMM…TGGF, LTWV…VTGY, and LHTF…FLMI. The heme b site is built by His187 and His202.

The protein belongs to the cytochrome b family. PetB subfamily. In terms of assembly, the 4 large subunits of the cytochrome b6-f complex are cytochrome b6, subunit IV (17 kDa polypeptide, PetD), cytochrome f and the Rieske protein, while the 4 small subunits are PetG, PetL, PetM and PetN. The complex functions as a dimer. Requires heme b as cofactor. Heme c serves as cofactor.

Its subcellular location is the plastid. It localises to the chloroplast thylakoid membrane. Functionally, component of the cytochrome b6-f complex, which mediates electron transfer between photosystem II (PSII) and photosystem I (PSI), cyclic electron flow around PSI, and state transitions. The sequence is that of Cytochrome b6 from Chaetosphaeridium globosum (Charophycean green alga).